A 787-amino-acid chain; its full sequence is (-)-kolavenyl diphosphate synthase, chloroplastic (787 aa).

A chloroplast-targeting transit peptide spans 1–47; the sequence is MSFATSLPRPTTTGAAGFGLPLATCISLSVSHSFSPKFGICNNTSLR. A substrate-binding site is contributed by K237. D368 and D370 together coordinate Mg(2+). The DXDD motif signature appears at 368–371; that stretch reads DSDD. A substrate-binding site is contributed by K454.

The protein belongs to the terpene synthase family. Tpsc subfamily. Requires Mg(2+) as cofactor. Expressed in peltate glandular trichomes of leaves. Highly expressed in the first leaf pair.

The protein resides in the plastid. It localises to the chloroplast. It catalyses the reaction (2E,6E,10E)-geranylgeranyl diphosphate = (-)-kolavenyl diphosphate. Its activity is regulated as follows. Inhibited by high concentrations of magnesium. In terms of biological role, involved in the biosynthesis of clerodane diterpenoids natural products, including salvinorin A with potent agonistic activity on brain kappa-opioid receptors, thus conferring hallucinogenic properties. Diterpene synthase that catalyzes the formation of (-)-kolavenyl diphosphate from geranylgeranyl diphosphate (GGPP) as the first reaction in salvinorin A biosynthesis. The protein is (-)-kolavenyl diphosphate synthase, chloroplastic of Salvia divinorum (Maria pastora).